A 352-amino-acid polypeptide reads, in one-letter code: Probable protein phosphatase 2C 56 (352 aa).

2 disordered regions span residues 18–37 and 53–87; these read RGRR…ASRG and SSSS…ITGG. 2 stretches are compositionally biased toward low complexity: residues 23–37 and 53–75; these read AASP…ASRG and SSSS…ARTR. The region spanning 96-343 is the PPM-type phosphatase domain; it reads SWDYSSFKGR…DNITCIVLQF (248 aa). Mn(2+) is bound by residues Asp132, Gly133, Asp295, and Asp334.

The protein belongs to the PP2C family. Mg(2+) serves as cofactor. Mn(2+) is required as a cofactor.

The catalysed reaction is O-phospho-L-seryl-[protein] + H2O = L-seryl-[protein] + phosphate. The enzyme catalyses O-phospho-L-threonyl-[protein] + H2O = L-threonyl-[protein] + phosphate. The sequence is that of Probable protein phosphatase 2C 56 from Oryza sativa subsp. japonica (Rice).